Consider the following 92-residue polypeptide: MKSIGVVRKVDELGRIVMPIELRRALDIAIKDSIEFFVDGDKIILKKYKPHGVCLMTGEITSENKEYGNGKITLSPEGAQLLLEEIQAALKE.

One can recognise a SpoVT-AbrB domain in the interval 5–50 (GVVRKVDELGRIVMPIELRRALDIAIKDSIEFFVDGDKIILKKYKP).

It to B.subtilis AbrB and SpoVT.

In Bacillus subtilis (strain 168), this protein is Putative transition state regulator Abh (abh).